We begin with the raw amino-acid sequence, 1025 residues long: Multidrug resistance protein MdtC (1025 aa).

Transmembrane regions (helical) follow at residues 3-23, 333-353, 360-380, 387-407, 431-451, 469-489, 528-548, 853-873, 875-895, 897-917, 953-973, and 984-1004; these read FFAL…AITL, EVEQ…FLFL, IIPA…MYLC, LSLM…IVVL, VGFT…PLLL, VAIG…CGWM, LVGV…ISIP, VILI…LYES, VHPL…LLAL, LFNA…IGIV, PIMM…LSGG, and ITIV…TPVV.

It belongs to the resistance-nodulation-cell division (RND) (TC 2.A.6) family. MdtC subfamily. As to quaternary structure, part of a tripartite efflux system composed of MdtA, MdtB and MdtC. MdtC forms a heteromultimer with MdtB.

The protein localises to the cell inner membrane. The MdtABC tripartite complex confers resistance against novobiocin and deoxycholate. The polypeptide is Multidrug resistance protein MdtC (Escherichia coli O9:H4 (strain HS)).